The primary structure comprises 227 residues: Dephospho-CoA kinase (227 aa).

Positions 31-227 (KIGLTGGIGS…EKLFQFINCL (197 aa)) constitute a DPCK domain. 39 to 44 (GSGKST) provides a ligand contact to ATP.

Belongs to the CoaE family.

The protein resides in the cytoplasm. It carries out the reaction 3'-dephospho-CoA + ATP = ADP + CoA + H(+). It functions in the pathway cofactor biosynthesis; coenzyme A biosynthesis; CoA from (R)-pantothenate: step 5/5. Functionally, catalyzes the phosphorylation of the 3'-hydroxyl group of dephosphocoenzyme A to form coenzyme A. The chain is Dephospho-CoA kinase from Clostridium tetani (strain Massachusetts / E88).